The primary structure comprises 134 residues: uncharacterized protein (134 aa).

In terms of domain architecture, HIT spans 4–107 (IFTKIINREL…PTHSLSNFSF (104 aa)). The Histidine triad motif motif lies at 91–95 (HLHIH).

This is an uncharacterized protein from Mycobacterium leprae (strain TN).